We begin with the raw amino-acid sequence, 153 residues long: Aspartate carbamoyltransferase regulatory chain (153 aa).

Zn(2+) contacts are provided by Cys110, Cys115, Cys138, and Cys141.

It belongs to the PyrI family. As to quaternary structure, contains catalytic and regulatory chains. Zn(2+) serves as cofactor.

Functionally, involved in allosteric regulation of aspartate carbamoyltransferase. This chain is Aspartate carbamoyltransferase regulatory chain, found in Bacteroides thetaiotaomicron (strain ATCC 29148 / DSM 2079 / JCM 5827 / CCUG 10774 / NCTC 10582 / VPI-5482 / E50).